The sequence spans 265 residues: uncharacterized protein (265 aa).

The disordered stretch occupies residues 233-265 (STACGSDQRPTRLPRASCSSRSISGSAARPWKR). Low complexity predominate over residues 247 to 265 (RASCSSRSISGSAARPWKR).

This is an uncharacterized protein from Escherichia coli.